Reading from the N-terminus, the 146-residue chain is Large ribosomal subunit protein uL13 (146 aa).

Belongs to the universal ribosomal protein uL13 family. In terms of assembly, part of the 50S ribosomal subunit.

This protein is one of the early assembly proteins of the 50S ribosomal subunit, although it is not seen to bind rRNA by itself. It is important during the early stages of 50S assembly. The chain is Large ribosomal subunit protein uL13 from Methylobacillus flagellatus (strain ATCC 51484 / DSM 6875 / VKM B-1610 / KT).